The sequence spans 2863 residues: Lipopolysaccharide-responsive and beige-like anchor protein (2863 aa).

Disordered regions lie at residues 1–35 (MASEDNRVPSPPPTGDDGGGGGREETPTEGGALSL), 969–1005 (VGSQQPDTKDSPVCPHFTTNGNENSSIEKTSSLESAS), and 1018–1039 (EMKAEQENQELPDEGTLEETLT). Alanine 2 carries the N-acetylalanine modification. Phosphoserine is present on residues serine 10, serine 979, and serine 1003. Positions 985 to 1005 (FTTNGNENSSIEKTSSLESAS) are enriched in polar residues. Residues 1006–1053 (NIELQTTNTSYEEMKAEQENQELPDEGTLEETLTNETRNADDLEVSSD) adopt a coiled-coil conformation. Residues 1024-1034 (ENQELPDEGTL) show a composition bias toward acidic residues. Phosphoserine occurs at positions 1100, 1135, and 1139. Positions 1161–1176 (PVTEKQTDTETQDSKD) are enriched in basic and acidic residues. The disordered stretch occupies residues 1161-1193 (PVTEKQTDTETQDSKDSGIQTMTASGSSAMSPE). Residues 1177-1193 (SGIQTMTASGSSAMSPE) show a composition bias toward polar residues. A phosphoserine mark is found at serine 1233, serine 1247, and serine 1261. A WD 1 repeat occupies 1301–1343 (STVFRIPEFNWSQMHQRLLTDLLFSIETDIQMWRSHSTKTVMD). 2 positions are modified to phosphoserine: serine 1488 and serine 1498. Residues 1531–1548 (FLALAVVYFISVLMVSKY) form a helical membrane-spanning segment. Positions 1586–1599 (LTTASVEESESTSS) are enriched in low complexity. Disordered stretches follow at residues 1586 to 1668 (LTTA…KATP) and 1759 to 1789 (QASDMGGESPGSRSSNAKLPSVPTVDSVSQD). The residue at position 1605 (serine 1605) is a Phosphoserine. Basic and acidic residues predominate over residues 1650 to 1664 (KSPETKNDRGNDLDT). Serine 1767, serine 1770, and serine 2064 each carry phosphoserine. A compositionally biased stretch (polar residues) spans 1769–1789 (GSRSSNAKLPSVPTVDSVSQD). Residues 2073-2181 (NLAGPVSLST…TVKKVVNYLP (109 aa)) enclose the BEACH-type PH domain. The region spanning 2200-2489 (ASPRQLFKAS…QLLIEPHPPR (290 aa)) is the BEACH domain. At serine 2496 the chain carries Phosphoserine. WD repeat units lie at residues 2591–2633 (DQSI…LIQV), 2636–2679 (GHWD…SGIG), 2695–2735 (GHDY…RTLE), 2777–2816 (ETDDNIRAIQLSRDGQYLLTGGDRGVVVVRQVSDLKQLFA), and 2819–2858 (GCDAGIRAMALSYDQRCIISGMASGSIVLFYNDFNRWHHE).

In terms of assembly, interacts with TOM1 and TOLLIP. In terms of tissue distribution, ubiquitous.

The protein localises to the cell membrane. It is found in the endoplasmic reticulum membrane. Its subcellular location is the golgi apparatus. The protein resides in the trans-Golgi network membrane. It localises to the lysosome membrane. Involved in coupling signal transduction and vesicle trafficking to enable polarized secretion and/or membrane deposition of immune effector molecules. Involved in phagophore growth during mitophagy by regulating ATG9A trafficking to mitochondria. The polypeptide is Lipopolysaccharide-responsive and beige-like anchor protein (Homo sapiens (Human)).